The following is a 423-amino-acid chain: Serine hydroxymethyltransferase (423 aa).

(6S)-5,6,7,8-tetrahydrofolate is bound by residues L120 and 124–126; that span reads GHL. Residue K229 is modified to N6-(pyridoxal phosphate)lysine. Residue 353–355 participates in (6S)-5,6,7,8-tetrahydrofolate binding; that stretch reads SPF.

This sequence belongs to the SHMT family. In terms of assembly, homodimer. Requires pyridoxal 5'-phosphate as cofactor.

Its subcellular location is the cytoplasm. It carries out the reaction (6R)-5,10-methylene-5,6,7,8-tetrahydrofolate + glycine + H2O = (6S)-5,6,7,8-tetrahydrofolate + L-serine. It participates in one-carbon metabolism; tetrahydrofolate interconversion. The protein operates within amino-acid biosynthesis; glycine biosynthesis; glycine from L-serine: step 1/1. In terms of biological role, catalyzes the reversible interconversion of serine and glycine with tetrahydrofolate (THF) serving as the one-carbon carrier. This reaction serves as the major source of one-carbon groups required for the biosynthesis of purines, thymidylate, methionine, and other important biomolecules. Also exhibits THF-independent aldolase activity toward beta-hydroxyamino acids, producing glycine and aldehydes, via a retro-aldol mechanism. The sequence is that of Serine hydroxymethyltransferase from Prochlorococcus marinus subsp. pastoris (strain CCMP1986 / NIES-2087 / MED4).